Here is a 351-residue protein sequence, read N- to C-terminus: Leukotriene B4 receptor 1 (351 aa).

The Extracellular portion of the chain corresponds to 1-21 (MAANTTSPAAPSSPGGMSLSL). Asparagine 4 is a glycosylation site (N-linked (GlcNAc...) asparagine). A helical transmembrane segment spans residues 22–44 (LPIVLLSVALAVGLPGNSFVVWS). Residues 45–56 (ILKRMQKRTVTA) lie on the Cytoplasmic side of the membrane. A helical transmembrane segment spans residues 57–77 (LLVLNLALADLAVLLTAPFFL). At 78–93 (HFLARGTWSFREMGCR) the chain is on the extracellular side. A helical transmembrane segment spans residues 94–115 (LCHYVCGISMYASVLLITIMSL). The Cytoplasmic segment spans residues 116–140 (DRSLAVARPFMSQKVRTKAFARWVL). Residues 141–161 (AGIWVVSFLLAIPVLVYRTVK) traverse the membrane as a helical segment. Over 162-179 (WNNRTLICAPNYPNKEHK) the chain is Extracellular. An N-linked (GlcNAc...) asparagine glycan is attached at asparagine 164. A helical transmembrane segment spans residues 180-200 (VFHLLFEAITGFLLPFLAVVA). Over 201 to 222 (SYSDIGRRLQARRFRRSRRTGR) the chain is Cytoplasmic. A helical transmembrane segment spans residues 223–243 (LVVLIILAFAAFWLPYHLVNL). At 244–268 (VEAGRTVAGWDKNSPAGQRLRLARY) the chain is on the extracellular side. A helical transmembrane segment spans residues 269-289 (VLIALAFLSSSVNPVLYACAG). Over 290 to 351 (GGLLRSAGVG…TSSTIPESSK (62 aa)) the chain is Cytoplasmic. 2 stretches are compositionally biased toward polar residues: residues 311–326 (EVSSTRRGGTLVQTPK) and 339–351 (SFMTSSTIPESSK). Positions 311–351 (EVSSTRRGGTLVQTPKDTPACPEPGPTDSFMTSSTIPESSK) are disordered.

Belongs to the G-protein coupled receptor 1 family. Post-translationally, phosphorylated by GRK6 upon leukotriene B4 binding; which promotes desensitization. As to expression, highly expressed on activated leukocytes, including eosinophils.

The protein localises to the cell membrane. In terms of biological role, receptor for leukotriene B4, a potent chemoattractant involved in inflammation and immune response. The sequence is that of Leukotriene B4 receptor 1 (Ltb4r) from Mus musculus (Mouse).